The primary structure comprises 362 residues: Histidinol-phosphate aminotransferase (362 aa).

Lys220 carries the N6-(pyridoxal phosphate)lysine modification.

It belongs to the class-II pyridoxal-phosphate-dependent aminotransferase family. Histidinol-phosphate aminotransferase subfamily. Homodimer. The cofactor is pyridoxal 5'-phosphate.

The catalysed reaction is L-histidinol phosphate + 2-oxoglutarate = 3-(imidazol-4-yl)-2-oxopropyl phosphate + L-glutamate. It participates in amino-acid biosynthesis; L-histidine biosynthesis; L-histidine from 5-phospho-alpha-D-ribose 1-diphosphate: step 7/9. This Rhodospirillum centenum (strain ATCC 51521 / SW) protein is Histidinol-phosphate aminotransferase.